The primary structure comprises 76 residues: Large ribosomal subunit protein bL31 (76 aa).

It belongs to the bacterial ribosomal protein bL31 family. Type A subfamily. In terms of assembly, part of the 50S ribosomal subunit.

In terms of biological role, binds the 23S rRNA. This is Large ribosomal subunit protein bL31 from Beijerinckia indica subsp. indica (strain ATCC 9039 / DSM 1715 / NCIMB 8712).